The following is an 80-amino-acid chain: FXYD domain-containing ion transport regulator 7 (80 aa).

Residues 1 to 22 (MATPTQSPTNVPEETDPFFYDY) are Extracellular-facing. O-linked (GlcNAc) threonine glycans are attached at residues Thr3, Thr5, and Thr9. A helical membrane pass occupies residues 23-45 (ATVQTVGMTLATIMFVLGIIIIL). The Cytoplasmic segment spans residues 46 to 80 (SKKVKCRKADSRSESPTCKSCKSELPSSAPGGGGV). A disordered region spans residues 55 to 80 (DSRSESPTCKSCKSELPSSAPGGGGV). Ser73 carries the post-translational modification Phosphoserine.

The protein belongs to the FXYD family. As to quaternary structure, regulatory subunit of the sodium/potassium-transporting ATPase which is composed of a catalytic alpha subunit, a non-catalytic beta subunit and an additional regulatory subunit. The regulatory subunit, a member of the FXYD protein family, modulates the enzymatic activity in a tissue- and isoform-specific way by changing affinities of the Na+/K+-ATPase toward Na(+), K(+) or ATP. O-glycosylated; required for stabilization and translocation to the plasma membrane.

Its subcellular location is the cell membrane. Associates with and regulates the activity of the sodium/potassium-transporting ATPase (NKA) which catalyzes the hydrolysis of ATP coupled with the exchange of Na(+) and K(+) ions across the plasma membrane. Reduces the apparent affinity for external K(+), an effect that depends on the presence of external Na(+) and voltage. Increases the apparent affinity for intracellular Na(+). In Mus musculus (Mouse), this protein is FXYD domain-containing ion transport regulator 7 (Fxyd7).